The chain runs to 279 residues: Movement protein (279 aa).

The interval 247-279 (ESEELNVESPPAAIGSSSASRSEAFRPQVVNGL) is disordered. The segment covering 254–268 (ESPPAAIGSSSASRS) has biased composition (low complexity).

It belongs to the cucumovirus movement protein family.

It is found in the host cell junction. The protein resides in the host plasmodesma. Its function is as follows. Transports viral genome to neighboring plant cells directly through plasmosdesmata, without any budding. The movement protein allows efficient cell to cell propagation, by bypassing the host cell wall barrier. Acts by forming a tubular structure at the host plasmodesmata, enlarging it enough to allow free passage of virion capsids. In Cucumis sativus (Cucumber), this protein is Movement protein.